We begin with the raw amino-acid sequence, 364 residues long: UDP-N-acetylglucosamine--N-acetylmuramyl-(pentapeptide) pyrophosphoryl-undecaprenol N-acetylglucosamine transferase (364 aa).

UDP-N-acetyl-alpha-D-glucosamine is bound by residues threonine 10–glycine 12, asparagine 124, serine 195, isoleucine 250, and glutamine 295.

It belongs to the glycosyltransferase 28 family. MurG subfamily.

It localises to the cell membrane. The catalysed reaction is di-trans,octa-cis-undecaprenyl diphospho-N-acetyl-alpha-D-muramoyl-L-alanyl-D-glutamyl-meso-2,6-diaminopimeloyl-D-alanyl-D-alanine + UDP-N-acetyl-alpha-D-glucosamine = di-trans,octa-cis-undecaprenyl diphospho-[N-acetyl-alpha-D-glucosaminyl-(1-&gt;4)]-N-acetyl-alpha-D-muramoyl-L-alanyl-D-glutamyl-meso-2,6-diaminopimeloyl-D-alanyl-D-alanine + UDP + H(+). It participates in cell wall biogenesis; peptidoglycan biosynthesis. Its function is as follows. Cell wall formation. Catalyzes the transfer of a GlcNAc subunit on undecaprenyl-pyrophosphoryl-MurNAc-pentapeptide (lipid intermediate I) to form undecaprenyl-pyrophosphoryl-MurNAc-(pentapeptide)GlcNAc (lipid intermediate II). The sequence is that of UDP-N-acetylglucosamine--N-acetylmuramyl-(pentapeptide) pyrophosphoryl-undecaprenol N-acetylglucosamine transferase from Bacillus cytotoxicus (strain DSM 22905 / CIP 110041 / 391-98 / NVH 391-98).